Here is a 694-residue protein sequence, read N- to C-terminus: MIDRYKHQQLRIGSVSPQQISAWAKKILPNGETVGEVTKPYTFHYKTNKPEKDGLFCERIFGPIKSGICACGNYRVIGNQKEGPKFCEQCGVEFVDSRIRRYQMGYIRLACPVTHVWYLKRLPSYIANLLDKPLKELEGLVYCDFSFARPIAKKPTFLRLRGSFEYEIQSWKYSIPLFFTTQGFDTFRSREISTGAGAIREQLADLDLRILIDYSVVEWKELGEEGLTGNEWEDRKIGRRKDFLVRRMELAKHFIRTNIEPEWMVLCLLPVLPPELRPIIQIDGGKLMSSDINELYRRVIYRNNTLTDLLTTSRSTPGELVMCQEKLVQEAVDTLLDNGIRGQPMRDGHNKVYKSFSDVIEGKEGRFRETLLGRRVDYSGRSVIVVGPSLSLHRCGLPREIAIELFQTFVIRGLIRQHLAPNIGVAESKIREKGPIVWEILQEVMRGHPVLLNRAPTLHRLGIQAFQPILVEGRAICLHPLVCKGFNADFDGDQMAVPFSLEMQAEARLLMFSHMNLFSPAIGDPISILTQDMLIGLYVLTSGNRRGICANRYNPWNLKSYQNQRFDNNNYKSTREPFFFFLIHVMRLELMGRKESIQIVLCDSGGNQSNALLLQEKLPSKFTMNLRVPIMRFMDIIQQQEVQKKKFFVYTFEPLLVIFLFTEKSKKLYKGFFGPTHMIPNHMVSKLKNSMTPI.

Cysteine 69, cysteine 71, cysteine 87, and cysteine 90 together coordinate Zn(2+). Mg(2+) contacts are provided by aspartate 489, aspartate 491, and aspartate 493.

This sequence belongs to the RNA polymerase beta' chain family. RpoC1 subfamily. In terms of assembly, in plastids the minimal PEP RNA polymerase catalytic core is composed of four subunits: alpha, beta, beta', and beta''. When a (nuclear-encoded) sigma factor is associated with the core the holoenzyme is formed, which can initiate transcription. The cofactor is Mg(2+). Zn(2+) serves as cofactor.

The protein resides in the plastid. It is found in the chloroplast. The catalysed reaction is RNA(n) + a ribonucleoside 5'-triphosphate = RNA(n+1) + diphosphate. Functionally, DNA-dependent RNA polymerase catalyzes the transcription of DNA into RNA using the four ribonucleoside triphosphates as substrates. This chain is DNA-directed RNA polymerase subunit beta', found in Gossypium barbadense (Sea Island cotton).